Here is a 206-residue protein sequence, read N- to C-terminus: CMP-5'-(N-acetyl-N-hydroxy-3-aminopropyl)phosphonate hydrolase (206 aa).

A Nudix hydrolase domain is found at 37–166 (VRAPGAAIIV…RTVTSGTAIG (130 aa)). A Nudix box motif is present at residues 74–95 (GLVDDREDPAVTAAREAEEETG). Over residues 177–194 (RQQPGGVQEQPGGAQQQG) the composition is skewed to low complexity. Positions 177-206 (RQQPGGVQEQPGGAQQQGMNESHSGRTVRG) are disordered.

It belongs to the Nudix hydrolase family. Mg(2+) serves as cofactor.

It carries out the reaction CMP-5'-(N-acetyl-N-hydroxy-3-aminopropyl)phosphonate + H2O = 3-(N-acetyl-N-hydroxy)aminopropylphosphonate + CMP + H(+). It functions in the pathway antibiotic biosynthesis. Nucleotide hydrolase involved in the biosynthesis of the phosphonate antibiotic FR-900098, a potent antimalarial agent that acts as an inhibitor of 1-deoxy-D-xylulose 5-phosphate reductoisomerase (DXR), the first enzyme in the nonmevalonate pathway for isoprenoid biosynthesis. Catalyzes the hydrolysis of CMP-5'-(N-acetyl-N-hydroxy-3-aminopropyl)phosphonate (CMP-5'-FR-900098) to produce CMP and the final compound FR-900098. In vitro, has broad substrate specificity and also catalyzes the hydrolysis of all the other CMP-containing intermediates within the pathway and shows low activity toward CTP. This is CMP-5'-(N-acetyl-N-hydroxy-3-aminopropyl)phosphonate hydrolase from Streptomyces rubellomurinus (strain ATCC 31215).